The following is a 186-amino-acid chain: Agglutinin isolectin 3 (186 aa).

Gln1 bears the Pyrrolidone carboxylic acid mark. 4 Chitin-binding type-1 domains span residues 1–42, 43–85, 86–128, and 129–171; these read QRCG…ACWT, SKRC…PCRA, DIKC…ACST, and DKPC…GCDG. Intrachain disulfides connect Cys3–Cys18, Cys12–Cys24, Cys17–Cys31, Cys35–Cys40, Cys46–Cys61, Cys55–Cys67, Cys60–Cys74, Cys78–Cys83, Cys89–Cys104, Cys98–Cys110, Cys103–Cys117, Cys121–Cys126, Cys132–Cys147, Cys141–Cys153, Cys146–Cys160, and Cys164–Cys169. Position 10–12 (10–12) interacts with substrate; that stretch reads MEC. 62–73 is a binding site for substrate; the sequence is SQYGHCGFGAEY. 114-115 serves as a coordination point for substrate; sequence SE. Positions 172–186 are excised as a propeptide; sequence VFAEAIATNSTLLAE. Asn180 carries N-linked (GlcNAc...) asparagine glycosylation.

In terms of assembly, homodimer, u-shaped.

Its function is as follows. N-acetyl-D-glucosamine / N-acetyl-D-neuraminic acid binding lectin. This is Agglutinin isolectin 3 from Triticum aestivum (Wheat).